The sequence spans 159 residues: Protein hunchback (159 aa).

The span at 18–34 (HNHHHHHHHGHHQHQQR) shows a compositional bias: basic residues. 2 disordered regions span residues 18–49 (HNHH…QSPL) and 119–159 (LTPP…KYMA). Over residues 140 to 159 (EPEKEHDLMSNSSEDMKYMA) the composition is skewed to basic and acidic residues.

This sequence belongs to the hunchback C2H2-type zinc-finger protein family.

The protein resides in the nucleus. Its function is as follows. Gap class segmentation protein that controls development of head structures. The polypeptide is Protein hunchback (hb) (Drosophila soonae (Fruit fly)).